Here is a 606-residue protein sequence, read N- to C-terminus: 4-hydroxy-3-methylbut-2-en-1-yl diphosphate synthase (flavodoxin) (606 aa).

[4Fe-4S] cluster contacts are provided by cysteine 513, cysteine 516, cysteine 547, and glutamate 554.

It belongs to the IspG family. The cofactor is [4Fe-4S] cluster.

The catalysed reaction is (2E)-4-hydroxy-3-methylbut-2-enyl diphosphate + oxidized [flavodoxin] + H2O + 2 H(+) = 2-C-methyl-D-erythritol 2,4-cyclic diphosphate + reduced [flavodoxin]. Its pathway is isoprenoid biosynthesis; isopentenyl diphosphate biosynthesis via DXP pathway; isopentenyl diphosphate from 1-deoxy-D-xylulose 5-phosphate: step 5/6. Functionally, converts 2C-methyl-D-erythritol 2,4-cyclodiphosphate (ME-2,4cPP) into 1-hydroxy-2-methyl-2-(E)-butenyl 4-diphosphate. In Chlamydia felis (strain Fe/C-56) (Chlamydophila felis), this protein is 4-hydroxy-3-methylbut-2-en-1-yl diphosphate synthase (flavodoxin).